We begin with the raw amino-acid sequence, 155 residues long: Late embryogenesis abundant protein 2 (155 aa).

The disordered stretch occupies residues 1-155 (MTSHDQSYRA…DKDHFPTNRH (155 aa)). 2 stretches are compositionally biased toward basic and acidic residues: residues 11–21 (GEAKGRTEEKT) and 28–39 (IEDKAQAAKEKA). Positions 40 to 78 (QQAAQTAKDKTSQTAQAAKEKTQQTAQAAKDKTQQTTQA) are enriched in low complexity. Tandem repeats lie at residues 53 to 63 (TAQAAKEKTQQ) and 64 to 74 (TAQAAKDKTQQ). The tract at residues 53 to 74 (TAQAAKEKTQQTAQAAKDKTQQ) is 2 X 11 AA approximate tandem repeats of T-A-Q-A-A-K-E-K-T-Q-Q. Over residues 79–95 (TKEKAQDTTGRAKEKGS) the composition is skewed to basic and acidic residues. Positions 97–120 (MGQSTKETAQSGKDNSAGFLQQTG) are enriched in polar residues. Basic and acidic residues predominate over residues 144–155 (DQDKDHFPTNRH).

Belongs to the LEA type 4 family. As to expression, highest expression is found in seeds. No expression detected in adult tissues.

This Cicer arietinum (Chickpea) protein is Late embryogenesis abundant protein 2.